A 557-amino-acid chain; its full sequence is Pectinesterase/pectinesterase inhibitor 18 (557 aa).

The N-terminal stretch at 1–34 (MSNSNQPLLSKPKSLKHKNLCLVLSFVAILGSVA) is a signal peptide. The pectinesterase inhibitor 18 stretch occupies residues 47–203 (NNDDSLLTTS…VSRARVALAI (157 aa)). Residues 246-543 (NVVVAKDGTG…FTVAKLIQGG (298 aa)) are pectinesterase 18. Thr-321 and Gln-351 together coordinate substrate. The active-site Proton donor; for pectinesterase activity is Asp-374. The active-site Nucleophile; for pectinesterase activity is Asp-395. Substrate-binding residues include Arg-463 and Trp-465.

The protein in the N-terminal section; belongs to the PMEI family. In the C-terminal section; belongs to the pectinesterase family. As to expression, expressed in siliques, flowers, floral stems, rosette leaves and roots.

It localises to the secreted. The protein localises to the cell wall. The catalysed reaction is [(1-&gt;4)-alpha-D-galacturonosyl methyl ester](n) + n H2O = [(1-&gt;4)-alpha-D-galacturonosyl](n) + n methanol + n H(+). The enzyme catalyses Endohydrolysis of the N-glycosidic bond at one specific adenosine on the 28S rRNA.. Its pathway is glycan metabolism; pectin degradation; 2-dehydro-3-deoxy-D-gluconate from pectin: step 1/5. In terms of biological role, acts in the modification of cell walls via demethylesterification of cell wall pectin. Inhibits the elongation phase of protein synthesis. The polypeptide is Pectinesterase/pectinesterase inhibitor 18 (PME18) (Arabidopsis thaliana (Mouse-ear cress)).